Reading from the N-terminus, the 284-residue chain is Extracellular metalloprotease VDBG_01143 (284 aa).

Residues 1 to 18 (MLFKSLFVAAATAVGVSG) form the signal peptide. N-linked (GlcNAc...) asparagine glycosylation occurs at Asn-58. His-200 is a Zn(2+) binding site. Residue Glu-201 is part of the active site. Residue His-204 coordinates Zn(2+). A disulfide bond links Cys-236 and Cys-263.

This sequence belongs to the peptidase M43B family.

The protein resides in the secreted. Functionally, secreted metalloproteinase that allows assimilation of proteinaceous substrates. The polypeptide is Extracellular metalloprotease VDBG_01143 (Verticillium alfalfae (strain VaMs.102 / ATCC MYA-4576 / FGSC 10136) (Verticillium wilt of alfalfa)).